Reading from the N-terminus, the 308-residue chain is Pyrroline-5-carboxylate reductase 3 (308 aa).

Belongs to the pyrroline-5-carboxylate reductase family. In terms of assembly, homodecamer; composed of 5 homodimers.

It is found in the cytoplasm. It carries out the reaction L-proline + NADP(+) = (S)-1-pyrroline-5-carboxylate + NADPH + 2 H(+). The enzyme catalyses L-proline + NAD(+) = (S)-1-pyrroline-5-carboxylate + NADH + 2 H(+). It functions in the pathway amino-acid biosynthesis; L-proline biosynthesis; L-proline from L-glutamate 5-semialdehyde: step 1/1. Oxidoreductase that catalyzes the last step in proline biosynthesis, which corresponds to the reduction of pyrroline-5-carboxylate (P5C) to L-proline using NAD(P)H. Proline is synthesized from either glutamate or ornithine; both are converted to P5C, and then to proline via pyrroline-5-carboxylate reductases (PYCRs). PYCR3 is exclusively linked to the biosynthesis of proline from ornithine. The sequence is that of Pyrroline-5-carboxylate reductase 3 from Bos taurus (Bovine).